Reading from the N-terminus, the 309-residue chain is Succinate dehydrogenase [ubiquinone] iron-sulfur subunit 3, mitochondrial (309 aa).

Residues 1-22 constitute a mitochondrion transit peptide; that stretch reads MSSVLRLLGRRICNPAAEKVRL. Positions 69-160 constitute a 2Fe-2S ferredoxin-type domain; it reads FKIYRWNPDK…PTIITPLPHM (92 aa). 3 residues coordinate [2Fe-2S] cluster: Cys-120, Cys-125, and Cys-140. The 31-residue stretch at 202–232 folds into the 4Fe-4S ferredoxin-type domain; that stretch reads DRKKLDGLYECILCACCTTSCPSYWWNPEEF. Residues Cys-212, Cys-215, and Cys-218 each contribute to the [4Fe-4S] cluster site. Cys-222 serves as a coordination point for [3Fe-4S] cluster. Trp-227 is an a ubiquinone binding site. Positions 270 and 276 each coordinate [3Fe-4S] cluster. A [4Fe-4S] cluster-binding site is contributed by Cys-280.

It belongs to the succinate dehydrogenase/fumarate reductase iron-sulfur protein family. As to quaternary structure, component of complex II composed of eight subunits in plants: four classical SDH subunits SDH1, SDH2, SDH3 and SDH4 (a flavoprotein (FP), an iron-sulfur protein (IP), and a cytochrome b composed of a large and a small subunit.), as well as four subunits unknown in mitochondria from bacteria and heterotrophic eukaryotes. The cofactor is [2Fe-2S] cluster. [3Fe-4S] cluster serves as cofactor. Requires [4Fe-4S] cluster as cofactor.

It localises to the mitochondrion inner membrane. The catalysed reaction is a quinone + succinate = fumarate + a quinol. Its pathway is carbohydrate metabolism; tricarboxylic acid cycle; fumarate from succinate (eukaryal route): step 1/1. Iron-sulfur protein (IP) subunit of succinate dehydrogenase (SDH) that is involved in complex II of the mitochondrial electron transport chain and is responsible for transferring electrons from succinate to ubiquinone (coenzyme Q). The polypeptide is Succinate dehydrogenase [ubiquinone] iron-sulfur subunit 3, mitochondrial (SDH2-3) (Arabidopsis thaliana (Mouse-ear cress)).